The sequence spans 450 residues: MSVSLIASDQFRIVVGLGKSGMSLVRFLASRGIAFAVADTREQPPELETLRRDYPQVEVRCGELDVDFLCRANELYVSPGLALATPALQQAAARGVKLSGDIELFARHAKAPIVAISGSNAKSTVTTLVGEMAAKAGKRVAVGGNLGTPALDLLADDIELYVLELSSFQLETTDQLNAEVATVLNISEDHMDRYSGLPAYHLAKHRIFRGARQVVVNRQDALSRPLPVEGRPCWTFGLNPPDFKAFGLREVDGEKYLAFEFQTLMPARELKVRGAHNQSNALAALALGHAAGLPFEPMLEALREFGGLAHRCQWVRERNGVNWYDDSKATNVGAALAAIEGLGADIEGKLVLIAGGDGKGAEFTALREPVKRFCRAVVLLGRDAERLAEALGDAVPLVRVKTLDDAVQQCAELAQAGDAVLLSPACASLDMFKNFEERGRLFAQAAGGLA.

118–124 (GSNAKST) serves as a coordination point for ATP.

Belongs to the MurCDEF family.

It is found in the cytoplasm. The catalysed reaction is UDP-N-acetyl-alpha-D-muramoyl-L-alanine + D-glutamate + ATP = UDP-N-acetyl-alpha-D-muramoyl-L-alanyl-D-glutamate + ADP + phosphate + H(+). It participates in cell wall biogenesis; peptidoglycan biosynthesis. Its function is as follows. Cell wall formation. Catalyzes the addition of glutamate to the nucleotide precursor UDP-N-acetylmuramoyl-L-alanine (UMA). This chain is UDP-N-acetylmuramoylalanine--D-glutamate ligase, found in Pseudomonas putida (strain ATCC 47054 / DSM 6125 / CFBP 8728 / NCIMB 11950 / KT2440).